Reading from the N-terminus, the 212-residue chain is MSKILAIHASPRGERSHSRRLAETFLSAWQVRHPQAQVTRREVGRALIPAVNEAFVAAAFYPEPEARPLTMQADLALSDQLVGELFDHDLLLISTPMYNFNVPSGLKAWVDQIVRLGLTFDHTLDNGIAQYTPLLHGKKALIVTSRGGFGFGPGGELEALNHADPWLRTALGFIGINDVTVVAAEGEESAERTFAVSVAEAEQRLLDLARAF.

Residues Ser-10, 16–18, 97–100, and 145–148 each bind FMN; these read SHS, MYNF, and SRGG.

Belongs to the azoreductase type 1 family. As to quaternary structure, homodimer. Requires FMN as cofactor.

It catalyses the reaction 2 a quinone + NADH + H(+) = 2 a 1,4-benzosemiquinone + NAD(+). It carries out the reaction N,N-dimethyl-1,4-phenylenediamine + anthranilate + 2 NAD(+) = 2-(4-dimethylaminophenyl)diazenylbenzoate + 2 NADH + 2 H(+). Functionally, quinone reductase that provides resistance to thiol-specific stress caused by electrophilic quinones. Also exhibits azoreductase activity. Catalyzes the reductive cleavage of the azo bond in aromatic azo compounds to the corresponding amines. The protein is FMN-dependent NADH:quinone oxidoreductase 1 of Pseudomonas fluorescens (strain Pf0-1).